We begin with the raw amino-acid sequence, 122 residues long: Large ribosomal subunit protein bL20 (122 aa).

The protein belongs to the bacterial ribosomal protein bL20 family.

In terms of biological role, binds directly to 23S ribosomal RNA and is necessary for the in vitro assembly process of the 50S ribosomal subunit. It is not involved in the protein synthesizing functions of that subunit. In Treponema pallidum (strain Nichols), this protein is Large ribosomal subunit protein bL20 (rplT).